The following is a 98-amino-acid chain: MASTNFRPLHDRVVVKRVESEEKTKGGIIIPDTAKEKPAEGEIIAVGPGTRDDKGALVALDVKVGDRVLFGKWSGTEVKLDGVDLLIMKEADIMGVIG.

The protein belongs to the GroES chaperonin family. As to quaternary structure, heptamer of 7 subunits arranged in a ring. Interacts with the chaperonin GroEL.

The protein localises to the cytoplasm. In terms of biological role, together with the chaperonin GroEL, plays an essential role in assisting protein folding. The GroEL-GroES system forms a nano-cage that allows encapsulation of the non-native substrate proteins and provides a physical environment optimized to promote and accelerate protein folding. GroES binds to the apical surface of the GroEL ring, thereby capping the opening of the GroEL channel. This Allorhizobium ampelinum (strain ATCC BAA-846 / DSM 112012 / S4) (Agrobacterium vitis (strain S4)) protein is Co-chaperonin GroES.